A 327-amino-acid chain; its full sequence is Undecaprenyl-phosphate 4-deoxy-4-formamido-L-arabinose transferase (327 aa).

2 helical membrane passes run 233 to 253 (ILSL…LLLI) and 268 to 288 (VFTL…GMGL).

This sequence belongs to the glycosyltransferase 2 family.

It localises to the cell inner membrane. It catalyses the reaction UDP-4-deoxy-4-formamido-beta-L-arabinose + di-trans,octa-cis-undecaprenyl phosphate = 4-deoxy-4-formamido-alpha-L-arabinopyranosyl di-trans,octa-cis-undecaprenyl phosphate + UDP. The protein operates within glycolipid biosynthesis; 4-amino-4-deoxy-alpha-L-arabinose undecaprenyl phosphate biosynthesis; 4-amino-4-deoxy-alpha-L-arabinose undecaprenyl phosphate from UDP-4-deoxy-4-formamido-beta-L-arabinose and undecaprenyl phosphate: step 1/2. It functions in the pathway bacterial outer membrane biogenesis; lipopolysaccharide biosynthesis. Functionally, catalyzes the transfer of 4-deoxy-4-formamido-L-arabinose from UDP to undecaprenyl phosphate. The modified arabinose is attached to lipid A and is required for resistance to polymyxin and cationic antimicrobial peptides. This is Undecaprenyl-phosphate 4-deoxy-4-formamido-L-arabinose transferase from Pectobacterium carotovorum subsp. carotovorum (strain PC1).